The primary structure comprises 330 residues: Ribose operon repressor (330 aa).

The HTH lacI-type domain maps to Ala-2–Leu-56. The H-T-H motif DNA-binding region spans Met-4–Asn-23.

In terms of biological role, transcriptional repressor for the ribose rbsDACBK operon. RbsR binds to a region of perfect dyad symmetry spanning the rbs operon transcriptional start site. The affinity for the rbs operator is reduced by addition of ribose, consistent with ribose being the inducer of the operon. The protein is Ribose operon repressor (rbsR) of Escherichia coli O6:H1 (strain CFT073 / ATCC 700928 / UPEC).